Here is a 71-residue protein sequence, read N- to C-terminus: Heat-stable enterotoxin II (71 aa).

The N-terminal stretch at 1–23 is a signal peptide; the sequence is MKKNIAFLLASMFVFSIATNAYA. 2 disulfides stabilise this stretch: Cys-33/Cys-71 and Cys-44/Cys-59.

It is found in the secreted. Toxin which activates the particulate form of guanylate cyclase and increases cyclic GMP levels within the host intestinal epithelial cells. The polypeptide is Heat-stable enterotoxin II (stiI) (Escherichia coli).